The primary structure comprises 102 residues: N(4)-acetylcytidine amidohydrolase (102 aa).

Residues 6–92 (TFFGRFEADI…VIKAIYPGLD (87 aa)) form the ASCH domain. The active-site Proton acceptor is Lys20. Thr23 serves as the catalytic Nucleophile. Catalysis depends on Glu73, which acts as the Proton donor.

It belongs to the N(4)-acetylcytidine amidohydrolase family.

It catalyses the reaction N(4)-acetylcytidine + H2O = cytidine + acetate + H(+). The catalysed reaction is N(4)-acetyl-2'-deoxycytidine + H2O = 2'-deoxycytidine + acetate + H(+). It carries out the reaction N(4)-acetylcytosine + H2O = cytosine + acetate + H(+). Its function is as follows. Catalyzes the hydrolysis of N(4)-acetylcytidine (ac4C). This Yersinia pseudotuberculosis serotype O:1b (strain IP 31758) protein is N(4)-acetylcytidine amidohydrolase.